Here is a 166-residue protein sequence, read N- to C-terminus: MKYTSYILALQLCVLLGFSGSYGQGPFFKEIENLKEYFNASNPDVAEGGPLFIEILKNWKEESDRKIIQSQIVSFYFKLFENFKDNQVIQRSVDIIKQDMFQKFLNGSSEKLEDFKKLIQISVDDMQIQRKAINELIKVMNDLSPKSNLIKRKRSQNLFRGRRASM.

The signal sequence occupies residues 1–23 (MKYTSYILALQLCVLLGFSGSYG). Pyrrolidone carboxylic acid is present on Gln-24. 2 N-linked (GlcNAc...) asparagine glycosylation sites follow: Asn-39 and Asn-106.

Belongs to the type II (or gamma) interferon family. In terms of assembly, homodimer. Interacts with IFNGR1 (via extracellular domain); this interaction promotes IFNGR1 dimerization. In terms of tissue distribution, released primarily from activated T lymphocytes.

It is found in the secreted. In terms of biological role, type II interferon produced by immune cells such as T-cells and NK cells that plays crucial roles in antimicrobial, antiviral, and antitumor responses by activating effector immune cells and enhancing antigen presentation. Primarily signals through the JAK-STAT pathway after interaction with its receptor IFNGR1 to affect gene regulation. Upon IFNG binding, IFNGR1 intracellular domain opens out to allow association of downstream signaling components JAK2, JAK1 and STAT1, leading to STAT1 activation, nuclear translocation and transcription of IFNG-regulated genes. Many of the induced genes are transcription factors such as IRF1 that are able to further drive regulation of a next wave of transcription. Plays a role in class I antigen presentation pathway by inducing a replacement of catalytic proteasome subunits with immunoproteasome subunits. In turn, increases the quantity, quality, and repertoire of peptides for class I MHC loading. Increases the efficiency of peptide generation also by inducing the expression of activator PA28 that associates with the proteasome and alters its proteolytic cleavage preference. Up-regulates as well MHC II complexes on the cell surface by promoting expression of several key molecules such as cathepsins B/CTSB, H/CTSH, and L/CTSL. Participates in the regulation of hematopoietic stem cells during development and under homeostatic conditions by affecting their development, quiescence, and differentiation. In Cervus elaphus (Red deer), this protein is Interferon gamma (IFNG).